The sequence spans 360 residues: DNA replication and repair protein RecF (360 aa).

ATP is bound at residue 30 to 37 (GVNGAGKT).

The protein belongs to the RecF family.

It localises to the cytoplasm. In terms of biological role, the RecF protein is involved in DNA metabolism; it is required for DNA replication and normal SOS inducibility. RecF binds preferentially to single-stranded, linear DNA. It also seems to bind ATP. This Thioalkalivibrio sulfidiphilus (strain HL-EbGR7) protein is DNA replication and repair protein RecF.